A 169-amino-acid chain; its full sequence is Lipoprotein signal peptidase (169 aa).

3 helical membrane-spanning segments follow: residues 12–32, 70–90, and 102–122; these read WLWLVVVVLVLDFASKQWILG, WFFAGIAVAIVAVLLVMMYRS, and AFIIGGALGNLFDRLWHGFVV. Active-site residues include D123 and D141. A helical transmembrane segment spans residues 137–157; sequence FNLADSFICVGAAMIVLEGFL.

It belongs to the peptidase A8 family.

It localises to the cell inner membrane. The enzyme catalyses Release of signal peptides from bacterial membrane prolipoproteins. Hydrolyzes -Xaa-Yaa-Zaa-|-(S,diacylglyceryl)Cys-, in which Xaa is hydrophobic (preferably Leu), and Yaa (Ala or Ser) and Zaa (Gly or Ala) have small, neutral side chains.. It functions in the pathway protein modification; lipoprotein biosynthesis (signal peptide cleavage). Functionally, this protein specifically catalyzes the removal of signal peptides from prolipoproteins. The polypeptide is Lipoprotein signal peptidase (Serratia proteamaculans (strain 568)).